A 253-amino-acid polypeptide reads, in one-letter code: 3-deoxy-manno-octulosonate cytidylyltransferase (253 aa).

The protein belongs to the KdsB family.

It localises to the cytoplasm. The catalysed reaction is 3-deoxy-alpha-D-manno-oct-2-ulosonate + CTP = CMP-3-deoxy-beta-D-manno-octulosonate + diphosphate. The protein operates within nucleotide-sugar biosynthesis; CMP-3-deoxy-D-manno-octulosonate biosynthesis; CMP-3-deoxy-D-manno-octulosonate from 3-deoxy-D-manno-octulosonate and CTP: step 1/1. It participates in bacterial outer membrane biogenesis; lipopolysaccharide biosynthesis. Activates KDO (a required 8-carbon sugar) for incorporation into bacterial lipopolysaccharide in Gram-negative bacteria. The polypeptide is 3-deoxy-manno-octulosonate cytidylyltransferase (Neisseria gonorrhoeae (strain ATCC 700825 / FA 1090)).